A 1218-amino-acid polypeptide reads, in one-letter code: MGESQSKQESNTRVAQHGSQQDVDPTFQTKRALERERSSPQVEQSFLGQLQSLLGWSSTSKDVPLSQLIREMDHESRRHSHQSKKKLDRSEHISEGTIPEIYEKRKETISHTQSMEQKYLFQNFTKLLLLQKCCPGGSEKLVRESWHPCVPEEGGHMIEIQDLFDPNLDTEKKPQLVIIEGAAGIGKSTLARQVKRAWEEGQLYRDRFQHVFFFSCRELAQCKQLSLAELIAQGQEVLTAPTRQILSRPEKLLFILDGIDEPAWVLEDQNPELCVHWSQAQPVHTLLGSLLGKSILPEASLMLTARTTALQKLIPSLGQPHRVEVLGFSEFERKDYFYKYFAKERNTIIDFNLIGSIPVLLTLCEVPWVCWLLCTCLEKQMQQGEVLSLTSQTTTALCLKYLSLTIPGQHLSTQLRTLCSLAAEGICQRRTLFSKSDLCKQGLAEDAIATFLKIGVLQRQPSSLSYSFAHLCLQEFFAAMSYILEDSEEARGDMGNDRTVETLVERYGRQNLFEAPTVRFLLGLLNTREMREMENIFACKFPWKTKLKLLRSIVGEPFCQPCHLGLFHCLYENQEEELLTETMLCFPLTASGPNHMEATVFQTNVKRLVIQTDMELMVVTFCITFSHVRSLRLKGKGQQEYKLTAPAMVLYRWTPISEASWKVLFSNLKCTRNLEELDLSGNPLSYSAVRSLCTALRQPGCRLKTLWLVDCGLTSRCCSFLASMLSAHSRLAELDLRLNDLGDNGVRQLCEGLRNPACNLSILRLDQASLSEQVITELRALETKNPKLFISSTWMSHMTMPTENTDGEESLTSSKQQQQQSGDKHMEPLGTDDDFWGPSGPVSTEVVDRERNLYRVRLPMAGSYHCPSTGLHFVVTRAVTIEIGFCAWSQFLHETPLQHSHMVAGPLFDIKAEHGAVTAVCLPHFVSLQEGKVDSSLFHVAHFQDHGMVLETPARVEPHFAVLENPSFSPMGVLLRMIPAVGHFIPITSITLIYYRLYLEDITFHLYLVPNDCTIRKAIDEEELKFQFVRINKPPPVDALYVGSRYIVSSSKEVEILPKELELCYRSPRESQLFSEIYVGNIGSGINLQLTDKKYMNLIWEALLKPGDLRPALPRMASAPKDAPALLHFVDQHREQLVARVTSVDPLLDKLHGLVLSEEDYETVRAEATNQDKMRKLFRGSRSWSWDCKDHFYQALKETHPHLIMDLLEKSGGVSVRL.

Over residues 1 to 29 (MGESQSKQESNTRVAQHGSQQDVDPTFQT) the composition is skewed to polar residues. Disordered stretches follow at residues 1–44 (MGES…QVEQ) and 71–91 (EMDH…DRSE). A compositionally biased stretch (basic residues) spans 77–87 (RRHSHQSKKKL). Positions 175–484 (QLVIIEGAAG…EFFAAMSYIL (310 aa)) constitute an NACHT domain. Position 181 to 188 (181 to 188 (GAAGIGKS)) interacts with ATP. 3 LRR repeats span residues 343 to 364 (KERN…LTLC), 673 to 693 (NLEE…RSLC), and 730 to 750 (RLAE…RQLC). Positions 799–815 (TMPTENTDGEESLTSSK) are enriched in polar residues. Positions 799–842 (TMPTENTDGEESLTSSKQQQQQSGDKHMEPLGTDDDFWGPSGPV) are disordered. The interval 835-968 (FWGPSGPVST…HFAVLENPSF (134 aa)) is ZU5. Positions 835–1118 (FWGPSGPVST…LRPALPRMAS (284 aa)) constitute an FIIND domain. The segment at 969–1118 (SPMGVLLRMI…LRPALPRMAS (150 aa)) is UPA. A CARD domain is found at 1122-1211 (DAPALLHFVD…HLIMDLLEKS (90 aa)).

It belongs to the NLRP family. As to quaternary structure, interacts (via LRR repeats) with BCL2 and BCL2L1 (via the loop between motifs BH4 and BH3). Interacts with NOD2; this interaction is enhanced in the presence of muramyl dipeptide (MDP) and increases IL1B release. Interacts with EIF2AK2/PKR; this interaction requires EIF2AK2 activity, is accompanied by EIF2AK2 autophosphorylation and promotes inflammasome assembly in response to danger-associated signals. Interacts with MEFV; this interaction targets Nlrp1a to degradation by autophagy, hence preventing excessive IL1B- and IL18-mediated inflammation. Interacts with DPP9; leading to inhibit activation of the inflammasome. DPP9 acts via formation of a ternary complex, composed of a DPP9 homodimer, one full-length NLRP1 protein, and one cleaved C-terminus of Nlrp1a (NACHT, LRR and PYD domains-containing protein 1a, C-terminus). Interacts with DPP8; leading to inhibit activation of the inflammasome, probably via formation of a ternary complex with DPP8. Interacts with the C-terminal part of Nlrp1a (NACHT, LRR and PYD domains-containing protein 1a, C-terminus) in absence of pathogens and other damage-associated signals. In terms of assembly, interacts with the N-terminal part of Nlrp1a (NACHT, LRR and PYD domains-containing protein 1a, N-terminus) in absence of pathogens and other damage-associated signals. Homomultimer; forms the Nlrp1a inflammasome polymeric complex, a filament composed of homopolymers of this form in response to pathogens and other damage-associated signals. The Nlrp1a inflammasome polymeric complex directly recruits pro-caspase-1 (proCASP1) independently of PYCARD/ASC. Interacts (via CARD domain) with CASP1 (via CARD domain); leading to CASP1 activation. Autocatalytically cleaved. Autocatalytic cleavage in FIIND region occurs constitutively, prior to activation signals, and is required for inflammasome activity (IL1B release), possibly by facilitating CASP1 binding. Both N- and C-terminal parts remain associated non-covalently. Post-translationally, ubiquitinated in response to pathogen-associated signals, leading to its degradation by the proteasome and subsequent release of the cleaved C-terminal part of the protein (NACHT, LRR and PYD domains-containing protein 1a, C-terminus), which polymerizes and forms the Nlrp1a inflammasome.

It localises to the cytoplasm. It is found in the cytosol. The protein localises to the nucleus. The protein resides in the inflammasome. Its activity is regulated as follows. Activated by pathogens and other damage-associated signals: activation promotes ubiquitination and degradation of the N-terminal part, releasing the cleaved C-terminal part of the protein (NACHT, LRR and PYD domains-containing protein 1a, C-terminus), which polymerizes and forms the Nlrp1a inflammasome. Nlrp1a inflammasome is inhibited by DPP8 and DPP9, which sequester the C-terminal fragment of Nlrp1a (NACHT, LRR and PYD domains-containing protein 1a, C-terminus) in a ternary complex, thereby preventing Nlrp1a oligomerization and activation. Nlrp1a inflammasome is strongly activated by Val-boroPro (Talabostat, PT-100), an inhibitor of dipeptidyl peptidases DPP8 and DPP9. Val-boroPro relieves inhibition of DPP8 and/or DPP9 by promoting disruption of the ternary complex, releasing its C-terminal part from autoinhibition. Not activated by cleavage by B.anthracis lethal toxin (LT) endopeptidase. Highly activated by Toxoplasma gondii. In terms of biological role, acts as the sensor component of the Nlrp1a inflammasome, which mediates inflammasome activation in response to various pathogen-associated signals, leading to subsequent pyroptosis. Inflammasomes are supramolecular complexes that assemble in the cytosol in response to pathogens and other damage-associated signals and play critical roles in innate immunity and inflammation. Acts as a recognition receptor (PRR): recognizes specific pathogens and other damage-associated signals, such as Val-boroPro inhibitor, and mediates the formation of the inflammasome polymeric complex. In response to pathogen-associated signals, the N-terminal part of Nlrp1a is degraded by the proteasome, releasing the cleaved C-terminal part of the protein (NACHT, LRR and PYD domains-containing protein 1a, C-terminus), which polymerizes to initiate the formation of the inflammasome complex: the inflammasome directly recruits pro-caspase-1 (proCASP1) independently of PYCARD/ASC and promotes caspase-1 (CASP1) activation, which subsequently cleaves and activates inflammatory cytokines IL1B and IL18 and gasdermin-D (GSDMD), leading to pyroptosis. In the absence of GSDMD expression, the Nlrp1a inflammasome is able to recruit and activate CASP8, leading to activation of gasdermin-E (GSDME). Its function is as follows. Constitutes the precursor of the Nlrp1a inflammasome, which mediates autoproteolytic processing within the FIIND domain to generate the N-terminal and C-terminal parts, which are associated non-covalently in absence of pathogens and other damage-associated signals. Functionally, regulatory part that prevents formation of the Nlrp1a inflammasome: in absence of pathogens and other damage-associated signals, interacts with the C-terminal part of Nlrp1a (NACHT, LRR and PYD domains-containing protein 1a, C-terminus), preventing activation of the Nlrp1a inflammasome. In response to pathogen-associated signals, this part is ubiquitinated by the N-end rule pathway and degraded by the proteasome, releasing the cleaved C-terminal part of the protein, which polymerizes and forms the Nlrp1a inflammasome. Constitutes the active part of the Nlrp1a inflammasome. In absence of pathogens and other damage-associated signals, interacts with the N-terminal part of Nlrp1a (NACHT, LRR and PYD domains-containing protein 1a, N-terminus), preventing activation of the Nlrp1a inflammasome. In response to pathogen-associated signals, the N-terminal part of Nlrp1a is degraded by the proteasome, releasing this form, which polymerizes to form the Nlrp1a inflammasome complex: the Nlrp1a inflammasome complex then directly recruits pro-caspase-1 (proCASP1) and promotes caspase-1 (CASP1) activation, leading to gasdermin-D (GSDMD) cleavage and subsequent pyroptosis. In Rattus norvegicus (Rat), this protein is NACHT, LRR and PYD domains-containing protein 1a allele 5.